The following is a 242-amino-acid chain: uncharacterized protein (242 aa).

Glycine 198, isoleucine 218, and leucine 227 together coordinate S-adenosyl-L-methionine.

Belongs to the class IV-like SAM-binding methyltransferase superfamily. RNA methyltransferase TrmH family.

This is an uncharacterized protein from Mycoplasma pneumoniae (strain ATCC 29342 / M129 / Subtype 1) (Mycoplasmoides pneumoniae).